A 440-amino-acid polypeptide reads, in one-letter code: Chromosomal replication initiator protein DnaA (440 aa).

Residues 1 to 69 (MKERILQEIK…VKVVLGNDAT (69 aa)) form a domain I, interacts with DnaA modulators region. A domain II region spans residues 69-96 (TFEITYEAFEPHSSYSEPLVKKRAVLLT). The tract at residues 97-313 (PLNPDYTFEN…GAIIKLLVYK (217 aa)) is domain III, AAA+ region. Residues glycine 140, glycine 142, lysine 143, and threonine 144 each contribute to the ATP site. The domain IV, binds dsDNA stretch occupies residues 314 to 440 (ETTGKEVDLR…GEISKRALSG (127 aa)).

Belongs to the DnaA family. In terms of assembly, oligomerizes as a right-handed, spiral filament on DNA at oriC.

It is found in the cytoplasm. Functionally, plays an essential role in the initiation and regulation of chromosomal replication. ATP-DnaA binds to the origin of replication (oriC) to initiate formation of the DNA replication initiation complex once per cell cycle. Binds the DnaA box (a 9 base pair repeat at the origin) and separates the double-stranded (ds)DNA. Forms a right-handed helical filament on oriC DNA; dsDNA binds to the exterior of the filament while single-stranded (ss)DNA is stabiized in the filament's interior. The ATP-DnaA-oriC complex binds and stabilizes one strand of the AT-rich DNA unwinding element (DUE), permitting loading of DNA polymerase. After initiation quickly degrades to an ADP-DnaA complex that is not apt for DNA replication. Binds acidic phospholipids. The sequence is that of Chromosomal replication initiator protein DnaA from Thermotoga petrophila (strain ATCC BAA-488 / DSM 13995 / JCM 10881 / RKU-1).